A 403-amino-acid polypeptide reads, in one-letter code: uncharacterized protein (403 aa).

A run of 12 helical transmembrane segments spans residues 25–47 (IAFF…ILFL), 62–81 (SLSA…GPLS), 88–110 (VVMS…MNSW), 114–136 (IFMR…TYLS), 143–165 (VLSF…GRFL), 175–197 (WNIA…VYLL), 229–251 (LFFM…GYRL), 256–278 (FFLG…YSSP), 290–307 (GVIL…VLIT), 311–330 (IVLL…FAAH), 350–372 (SIYL…IFWI), and 376–398 (WLGI…IRLL).

The protein belongs to the major facilitator superfamily.

It is found in the cell membrane. This is an uncharacterized protein from Buchnera aphidicola subsp. Baizongia pistaciae (strain Bp).